Reading from the N-terminus, the 827-residue chain is Glycerol-3-phosphate acyltransferase (827 aa).

The short motif at 325–330 is the HXXXXD motif element; that stretch reads CHRSHM.

The protein belongs to the GPAT/DAPAT family.

The protein resides in the cell inner membrane. The enzyme catalyses sn-glycerol 3-phosphate + an acyl-CoA = a 1-acyl-sn-glycero-3-phosphate + CoA. Its pathway is phospholipid metabolism; CDP-diacylglycerol biosynthesis; CDP-diacylglycerol from sn-glycerol 3-phosphate: step 1/3. The polypeptide is Glycerol-3-phosphate acyltransferase (Escherichia coli (strain SMS-3-5 / SECEC)).